The following is a 128-amino-acid chain: Cytochrome c-type biogenesis protein CcmE (128 aa).

At 1–8 (MQKRVRNR) the chain is on the cytoplasmic side. The helical; Signal-anchor for type II membrane protein transmembrane segment at 9 to 29 (LITIIICFCSACLGISIILYN) threads the bilayer. The Periplasmic portion of the chain corresponds to 30–128 (LEKNIVFFLP…KHDENYRPPQ (99 aa)). His120 and Tyr124 together coordinate heme.

Belongs to the CcmE/CycJ family.

The protein localises to the cell inner membrane. Its function is as follows. Heme chaperone required for the biogenesis of c-type cytochromes. Transiently binds heme delivered by CcmC and transfers the heme to apo-cytochromes in a process facilitated by CcmF and CcmH. In Rickettsia conorii (strain ATCC VR-613 / Malish 7), this protein is Cytochrome c-type biogenesis protein CcmE.